Consider the following 221-residue polypeptide: Ribosomal RNA large subunit methyltransferase E (221 aa).

Residues Gly60, Trp62, Asp89, Asp105, and Asp134 each contribute to the S-adenosyl-L-methionine site. The active-site Proton acceptor is the Lys174.

The protein belongs to the class I-like SAM-binding methyltransferase superfamily. RNA methyltransferase RlmE family.

Its subcellular location is the cytoplasm. It catalyses the reaction uridine(2552) in 23S rRNA + S-adenosyl-L-methionine = 2'-O-methyluridine(2552) in 23S rRNA + S-adenosyl-L-homocysteine + H(+). Functionally, specifically methylates the uridine in position 2552 of 23S rRNA at the 2'-O position of the ribose in the fully assembled 50S ribosomal subunit. This is Ribosomal RNA large subunit methyltransferase E from Cupriavidus metallidurans (strain ATCC 43123 / DSM 2839 / NBRC 102507 / CH34) (Ralstonia metallidurans).